A 141-amino-acid chain; its full sequence is ER membrane protein complex subunit 5 (141 aa).

Over Met-1–Lys-6 the chain is Cytoplasmic. A helical transmembrane segment spans residues Leu-7–His-27. Residues His-28 to Asp-48 lie on the Lumenal side of the membrane. A helical membrane pass occupies residues Ile-49 to Glu-69. Residues Lys-70–Lys-141 lie on the Cytoplasmic side of the membrane.

The protein belongs to the membrane magnesium transporter (TC 1.A.67) family. As to quaternary structure, component of the ER membrane protein complex (EMC), which is composed of EMC1, EMC2, EMC3, EMC4, EMC5 and EMC6.

Its subcellular location is the endoplasmic reticulum membrane. Part of the endoplasmic reticulum membrane protein complex (EMC) that enables the energy-independent insertion into endoplasmic reticulum membranes of newly synthesized membrane proteins. Preferentially accommodates proteins with transmembrane domains that are weakly hydrophobic or contain destabilizing features such as charged and aromatic residues. Involved in the cotranslational insertion of multi-pass membrane proteins in which stop-transfer membrane-anchor sequences become ER membrane spanning helices. It is also required for the post-translational insertion of tail-anchored/TA proteins in endoplasmic reticulum membranes. By mediating the proper cotranslational insertion of N-terminal transmembrane domains in an N-exo topology, with translocated N-terminus in the lumen of the ER, controls the topology of multi-pass membrane proteins. The sequence is that of ER membrane protein complex subunit 5 (EMC5) from Saccharomyces cerevisiae (strain ATCC 204508 / S288c) (Baker's yeast).